The sequence spans 358 residues: Pyruvate dehydrogenase E1 component subunit alpha (358 aa).

Heterodimer of an alpha and a beta chain. Thiamine diphosphate serves as cofactor.

It carries out the reaction N(6)-[(R)-lipoyl]-L-lysyl-[protein] + pyruvate + H(+) = N(6)-[(R)-S(8)-acetyldihydrolipoyl]-L-lysyl-[protein] + CO2. In terms of biological role, the pyruvate dehydrogenase complex catalyzes the overall conversion of pyruvate to acetyl-CoA and CO(2). It contains multiple copies of three enzymatic components: pyruvate dehydrogenase (E1), dihydrolipoamide acetyltransferase (E2) and lipoamide dehydrogenase (E3). The polypeptide is Pyruvate dehydrogenase E1 component subunit alpha (pdhA) (Mycoplasma genitalium (strain ATCC 33530 / DSM 19775 / NCTC 10195 / G37) (Mycoplasmoides genitalium)).